The chain runs to 647 residues: DNA mismatch repair protein MutL (647 aa).

The protein belongs to the DNA mismatch repair MutL/HexB family.

Its function is as follows. This protein is involved in the repair of mismatches in DNA. It is required for dam-dependent methyl-directed DNA mismatch repair. May act as a 'molecular matchmaker', a protein that promotes the formation of a stable complex between two or more DNA-binding proteins in an ATP-dependent manner without itself being part of a final effector complex. The protein is DNA mismatch repair protein MutL of Bacillus cereus (strain G9842).